Here is a 145-residue protein sequence, read N- to C-terminus: Peptide methionine sulfoxide reductase MsrB (145 aa).

Positions 4-127 (SEELKQRIGD…NSAALKFIPY (124 aa)) constitute a MsrB domain. The Nucleophile role is filled by Cys-116.

Belongs to the MsrB Met sulfoxide reductase family.

The enzyme catalyses L-methionyl-[protein] + [thioredoxin]-disulfide + H2O = L-methionyl-(R)-S-oxide-[protein] + [thioredoxin]-dithiol. In Streptococcus pyogenes serotype M6 (strain ATCC BAA-946 / MGAS10394), this protein is Peptide methionine sulfoxide reductase MsrB.